The primary structure comprises 305 residues: Aspartate carbamoyltransferase catalytic subunit (305 aa).

Positions 51 and 52 each coordinate carbamoyl phosphate. Position 79 (Lys79) interacts with L-aspartate. The carbamoyl phosphate site is built by Arg101, His130, and Gln133. Residues Arg163 and Arg215 each coordinate L-aspartate. Carbamoyl phosphate contacts are provided by Gly256 and Pro257.

Belongs to the aspartate/ornithine carbamoyltransferase superfamily. ATCase family. In terms of assembly, heterododecamer (2C3:3R2) of six catalytic PyrB chains organized as two trimers (C3), and six regulatory PyrI chains organized as three dimers (R2).

The enzyme catalyses carbamoyl phosphate + L-aspartate = N-carbamoyl-L-aspartate + phosphate + H(+). Its pathway is pyrimidine metabolism; UMP biosynthesis via de novo pathway; (S)-dihydroorotate from bicarbonate: step 2/3. In terms of biological role, catalyzes the condensation of carbamoyl phosphate and aspartate to form carbamoyl aspartate and inorganic phosphate, the committed step in the de novo pyrimidine nucleotide biosynthesis pathway. In Ehrlichia canis (strain Jake), this protein is Aspartate carbamoyltransferase catalytic subunit.